The chain runs to 407 residues: Geranylgeranyl diphosphate reductase (407 aa).

This sequence belongs to the geranylgeranyl reductase family. ChlP subfamily.

The catalysed reaction is phytyl diphosphate + 3 NADP(+) = geranylgeranyl diphosphate + 3 NADPH + 3 H(+). It functions in the pathway porphyrin-containing compound metabolism; chlorophyll biosynthesis. In terms of biological role, catalyzes the stepwise hydrogenation of geranylgeraniol to phytol during chlorophyll A (ChlA) biosynthesis. The polypeptide is Geranylgeranyl diphosphate reductase (chlP) (Synechocystis sp. (strain ATCC 27184 / PCC 6803 / Kazusa)).